Reading from the N-terminus, the 487-residue chain is Glutamyl-tRNA(Gln) amidotransferase subunit A (487 aa).

Residues K77 and S152 each act as charge relay system in the active site. The active-site Acyl-ester intermediate is S176.

Belongs to the amidase family. GatA subfamily. As to quaternary structure, heterotrimer of A, B and C subunits.

It carries out the reaction L-glutamyl-tRNA(Gln) + L-glutamine + ATP + H2O = L-glutaminyl-tRNA(Gln) + L-glutamate + ADP + phosphate + H(+). Allows the formation of correctly charged Gln-tRNA(Gln) through the transamidation of misacylated Glu-tRNA(Gln) in organisms which lack glutaminyl-tRNA synthetase. The reaction takes place in the presence of glutamine and ATP through an activated gamma-phospho-Glu-tRNA(Gln). The chain is Glutamyl-tRNA(Gln) amidotransferase subunit A from Lysinibacillus sphaericus (strain C3-41).